Here is an 87-residue protein sequence, read N- to C-terminus: uncharacterized protein (87 aa).

It to bacteriophage lambda exonuclease exo.

This is an uncharacterized protein from Escherichia coli (strain K12).